The following is a 409-amino-acid chain: Nucleoprotein (409 aa).

Disordered regions lie at residues 1 to 32 (MASG…SSGN), 44 to 69 (LNSP…QQHG), 121 to 145 (ADVK…LRFS), 164 to 195 (RSGR…SEGD), and 238 to 259 (VDQV…DKMN). Low complexity predominate over residues 15–31 (PVIKLGGPKPPKVGSSG). Positions 29 to 160 (SSGNASWFQA…GNFRWDFIPL (132 aa)) are RNA-binding. The CoV N NTD domain occupies 31 to 156 (GNASWFQAIK…GGPDGNFRWD (126 aa)). Positions 164–179 (RSGRSTAASSAASSRA) are enriched in low complexity. Composition is skewed to basic and acidic residues over residues 180–192 (PSRD…RSGS) and 247–259 (KGKE…DKMN). A phosphoserine; by host mark is found at Ser190 and Ser192. The CoV N CTD domain occupies 215–331 (TKAKADEMAH…QCVDGVGTRP (117 aa)). Residues 226–333 (RYCKRTIPPG…VDGVGTRPKD (108 aa)) form a dimerization region. Cys320 and Cys323 form a disulfide bridge. The tract at residues 326 to 409 (GVGTRPKDDE…GDSALGENEL (84 aa)) is disordered. The span at 341–358 (RSSSRPATRTSSPALRQQ) shows a compositional bias: low complexity. The segment covering 368-384 (KQDDEVDKALTSDEERN) has biased composition (basic and acidic residues). Thr378 bears the Phosphothreonine; by host mark. A Phosphoserine; by host modification is found at Ser379.

This sequence belongs to the gammacoronavirus nucleocapsid protein family. As to quaternary structure, homooligomer. Both monomeric and oligomeric forms interact with RNA. Interacts with protein M. Interacts with NSP3; this interaction serves to tether the genome to the newly translated replicase-transcriptase complex at a very early stage of infection. Post-translationally, ADP-ribosylated. The ADP-ribosylation is retained in the virion during infection. In terms of processing, phosphorylated on serine and threonine residues.

The protein localises to the virion. It localises to the host endoplasmic reticulum-Golgi intermediate compartment. The protein resides in the host Golgi apparatus. Packages the positive strand viral genome RNA into a helical ribonucleocapsid (RNP) and plays a fundamental role during virion assembly through its interactions with the viral genome and membrane protein M. Plays an important role in enhancing the efficiency of subgenomic viral RNA transcription as well as viral replication. In Gallus gallus (Chicken), this protein is Nucleoprotein.